Here is a 562-residue protein sequence, read N- to C-terminus: MSLLYIILLFTQFLLLPTDAFDRSANTNIAVYWGQNSAGTQESLATYCESSDADIFLLSFLNQFPTLGLNFANACSDTFSDGLLHCTQIAEDIETCQSLGKKVLLSLGGASGSYLFSDDSQAETFAQTLWDTFGEGTGASERPFDSAVVDGFDFDIENNNEVGYSALATKLRTLFAEGTKQYYLSAAPQCPYPDASVGDLLENADIDFAFIQFYNNYCSVSGQFNWDTWLTYAQTVSPNKNIKLFLGLPGSASAAGSGYISDTSLLESTIADIASSSSFGGIALWDASQAFSNELNGEPYVEILKNLLTSASQTATTTVATSKTSAASTSSASTSSASTSQKKTTQSTTSTQSKSKVTLSPTASSAIKTSITQTTKTLTSSTKTKSSLGTTTTESTLNSVAITSMKTTLSSQITSAALVTPQTTTTSIVSSAPIQTAITSTLSPATKSSSVVSLQTATTSTLSPTTTSTSSGSTSSGSTSSDSTARTLAKELNAQYAAGKLNGKSTCTEGEIACSADGKFAVCDHSAWVYMECASGTTCYAYDSGDSVYTQCNFSYLESNYF.

Residues 1–20 form the signal peptide; the sequence is MSLLYIILLFTQFLLLPTDA. Positions 27–311 constitute a GH18 domain; that stretch reads TNIAVYWGQN…EILKNLLTSA (285 aa). Glutamate 157 functions as the Proton donor in the catalytic mechanism. Disordered regions lie at residues 329–358 and 461–484; these read TSSA…SKVT and TLSP…SDST. A chitin-binding, high affinity region spans residues 481-562; the sequence is SDSTARTLAK…NFSYLESNYF (82 aa). Asparagine 553 carries N-linked (GlcNAc...) asparagine glycosylation.

Belongs to the glycosyl hydrolase 18 family. Chitinase class V subfamily. In terms of processing, extensively glycosylated with a series of short O-linked mannose oligosaccharides ranging in size from Man(2) to Man(5).

The protein resides in the secreted. It is found in the cell wall. It carries out the reaction Random endo-hydrolysis of N-acetyl-beta-D-glucosaminide (1-&gt;4)-beta-linkages in chitin and chitodextrins.. Chitinase is required for cell separation during growth of S.cerevisiae. In Saccharomyces cerevisiae (strain ATCC 204508 / S288c) (Baker's yeast), this protein is Endochitinase (CTS1).